A 487-amino-acid chain; its full sequence is MASATDTVSAGSTPRDKVVTRFAPSPTGFLHIGGARTALFNWLYARHHGGTYLLRIEDTDRARSTDAAIDAIFDGLEWLGLGGDEPAVFQFARSDRHAEVAHKLLEAGHAYRCYLTQEELAARRELAQAERRPFRIDSEWRDATPDQWPADQSYVVRMKAPREGETTIVDKVQGSITVQNSELDDFIILRSDGTPTYMLAVVVDDHDMGVTHVIRGDDHINNAFRQLVIIRGMHAIEGGWPDPVYAHIPLIHGADGAKLSKRHGALGVDAYRDEMGLLPEAVFNYLLRLGWGHGDEEIISREQAVAWFDIGDVNKGASRFDLKKLLNLNGHYIREADDARLAALVAPRLATLAPGFAPDKGLDLLTRAMPVLKVRAADINELAAGSVFLFAQRPLAMAEKAASLLTDDARAILTKVAGVLEAENVWTTGVLEATVKQMAEELGIGLGKIAQPLRASLTGQTTSPGIFDVLALLGKDESLSRIRDQAA.

Positions 24–34 (PSPTGFLHIGG) match the 'HIGH' region motif. A 'KMSKS' region motif is present at residues 258-262 (KLSKR). Lys261 is a binding site for ATP.

It belongs to the class-I aminoacyl-tRNA synthetase family. Glutamate--tRNA ligase type 1 subfamily. Monomer.

The protein localises to the cytoplasm. The enzyme catalyses tRNA(Glu) + L-glutamate + ATP = L-glutamyl-tRNA(Glu) + AMP + diphosphate. Its function is as follows. Catalyzes the attachment of glutamate to tRNA(Glu) in a two-step reaction: glutamate is first activated by ATP to form Glu-AMP and then transferred to the acceptor end of tRNA(Glu). The sequence is that of Glutamate--tRNA ligase 2 from Novosphingobium aromaticivorans (strain ATCC 700278 / DSM 12444 / CCUG 56034 / CIP 105152 / NBRC 16084 / F199).